A 383-amino-acid polypeptide reads, in one-letter code: Xylose/arabinose import ATP-binding protein XacJ (383 aa).

In terms of domain architecture, ABC transporter spans 4–235 (IQLTDLTKRF…PNNLFVAEFI (232 aa)). 36–43 (GPSGCGKS) contributes to the ATP binding site.

This sequence belongs to the ABC transporter superfamily. Carbohydrate uptake transporter-1 (CUT1) (TC 3.A.1.1) family. The complex is composed of two ATP-binding proteins (XacJ and XacK), two transmembrane proteins (XacH and XacI) and a solute-binding protein (XacG).

The protein resides in the cell membrane. The enzyme catalyses D-xylose(out) + ATP + H2O = D-xylose(in) + ADP + phosphate + H(+). It carries out the reaction L-arabinose(out) + ATP + H2O = L-arabinose(in) + ADP + phosphate + H(+). Part of the ABC transporter complex XacGHIJK involved in the uptake of xylose and arabinose. Responsible for energy coupling to the transport system. In Haloferax volcanii (strain ATCC 29605 / DSM 3757 / JCM 8879 / NBRC 14742 / NCIMB 2012 / VKM B-1768 / DS2) (Halobacterium volcanii), this protein is Xylose/arabinose import ATP-binding protein XacJ.